Here is a 228-residue protein sequence, read N- to C-terminus: Translation initiation factor 6 (228 aa).

Belongs to the eIF-6 family.

Its function is as follows. Binds to the 50S ribosomal subunit and prevents its association with the 30S ribosomal subunit to form the 70S initiation complex. The polypeptide is Translation initiation factor 6 (Thermococcus gammatolerans (strain DSM 15229 / JCM 11827 / EJ3)).